The sequence spans 461 residues: Glutamate-gated chloride channel alpha (461 aa).

An N-terminal signal peptide occupies residues 1 to 20 (MATWIVGKLIIASLILGIQA). The Extracellular segment spans residues 21-275 (QQARTKSQDI…TTIQLKREFS (255 aa)). Arginine 98, arginine 117, and serine 182 together coordinate L-glutamate. Cysteines 191 and 205 form a disulfide. An L-glutamate-binding site is contributed by serine 211. A glycan (N-linked (GlcNAc...) asparagine) is linked at asparagine 246. Cysteines 252 and 263 form a disulfide. The chain crosses the membrane as a helical span at residues 276 to 298 (FYLLQLYIPSCMLVIVSWVSFWF). Topologically, residues 299-303 (DRTAI) are cytoplasmic. The chain crosses the membrane as a helical span at residues 304 to 325 (PARVTLGVTTLLTMTAQSAGIN). Residues 326 to 332 (SQLPPVS) are Extracellular-facing. The helical transmembrane segment at 333–353 (YIKAIDVWIGACMTFIFCALL) threads the bilayer. Over 354 to 432 (EFALVNHIAN…EWNDISKRVD (79 aa)) the chain is Cytoplasmic. A helical transmembrane segment spans residues 433 to 454 (LISRALFPVLFFVFNILYWSRF). Residues 455-461 (GQQNVLF) lie on the Extracellular side of the membrane.

This sequence belongs to the ligand-gated ion channel (TC 1.A.9) family. Glutamate-gated chloride channel (TC 1.A.9.4) subfamily. Pentamer. Homooligomer, forms functional heterooligomers with glc-2.

It localises to the postsynaptic cell membrane. The protein localises to the cell membrane. Its function is as follows. Glutamate-gated chloride channel subunit; channel properties depend on the subunit composition. Glutamate binding triggers a rapidly reversible current in heteromeric channels formed by glc-1 and glc-2, while the anti-helmintic drug ivermectin and other avermectins trigger a permanently open channel configuration. Channels containing only glc-1 are activated by ivermectin, but not by glutamate alone (in vitro). The heteromeric channel formed by glc-1 and glc-2 is also activated by ibotenate, and it is blocked by picrotoxin and flufenamic acid. Plays a role in the regulation of locomotor behavior. In Caenorhabditis elegans, this protein is Glutamate-gated chloride channel alpha.